An 869-amino-acid polypeptide reads, in one-letter code: Bifunctional uridylyltransferase/uridylyl-removing enzyme (869 aa).

The interval 1 to 332 (MTATPADRPD…QFDGEAVPVQ (332 aa)) is uridylyltransferase. The tract at residues 333-691 (LDAGFSLRRG…RRAVPDNDAL (359 aa)) is uridylyl-removing. An HD domain is found at 450 to 572 (VDQHTLMVLR…VGTRERLDYL (123 aa)). ACT domains are found at residues 692–771 (EVFV…PSRR) and 798–869 (RISL…LDPT).

The protein belongs to the GlnD family. Mg(2+) serves as cofactor.

The enzyme catalyses [protein-PII]-L-tyrosine + UTP = [protein-PII]-uridylyl-L-tyrosine + diphosphate. It carries out the reaction [protein-PII]-uridylyl-L-tyrosine + H2O = [protein-PII]-L-tyrosine + UMP + H(+). Uridylyltransferase (UTase) activity is inhibited by glutamine, while glutamine activates uridylyl-removing (UR) activity. In terms of biological role, modifies, by uridylylation and deuridylylation, the PII regulatory proteins (GlnB and homologs), in response to the nitrogen status of the cell that GlnD senses through the glutamine level. Under low glutamine levels, catalyzes the conversion of the PII proteins and UTP to PII-UMP and PPi, while under higher glutamine levels, GlnD hydrolyzes PII-UMP to PII and UMP (deuridylylation). Thus, controls uridylylation state and activity of the PII proteins, and plays an important role in the regulation of nitrogen assimilation and metabolism. The sequence is that of Bifunctional uridylyltransferase/uridylyl-removing enzyme from Xanthomonas campestris pv. campestris (strain B100).